The primary structure comprises 74 residues: Small ribosomal subunit protein bS18 (74 aa).

It belongs to the bacterial ribosomal protein bS18 family. As to quaternary structure, part of the 30S ribosomal subunit. Forms a tight heterodimer with protein bS6.

In terms of biological role, binds as a heterodimer with protein bS6 to the central domain of the 16S rRNA, where it helps stabilize the platform of the 30S subunit. This Thioalkalivibrio sulfidiphilus (strain HL-EbGR7) protein is Small ribosomal subunit protein bS18.